Here is a 169-residue protein sequence, read N- to C-terminus: Der GTPase-activating protein YihI (169 aa).

Disordered regions lie at residues 1–75 and 144–169; these read MKPS…IPLG and GLSY…LRGN. Positions 10–19 are enriched in basic residues; it reads SKGHAKARRK. Residues 20-30 are compositionally biased toward basic and acidic residues; that stretch reads TREELDQEARD. Basic residues predominate over residues 31–40; the sequence is RKRQKKRRGH. Residues 49 to 58 show a composition bias toward polar residues; it reads GNTTSGSKGQ. Positions 147–159 are enriched in acidic residues; the sequence is YDDDEEEEEDEKQ. Over residues 160-169 the composition is skewed to basic and acidic residues; that stretch reads EDMMRLLRGN.

This sequence belongs to the YihI family. In terms of assembly, interacts with Der.

Functionally, a GTPase-activating protein (GAP) that modifies Der/EngA GTPase function. May play a role in ribosome biogenesis. This Escherichia coli (strain 55989 / EAEC) protein is Der GTPase-activating protein YihI.